The sequence spans 384 residues: Early estrogen-induced gene 1 protein (384 aa).

Residues 2 to 145 enclose the C2 NT-type domain; sequence AFLMKKKKFK…ILKVTIGMFL (144 aa). Residues 129 to 138 form a required for interaction with TNFRSF11A/RANK region; sequence NTRQDNSILK. Positions 173-315 are disordered; it reads LTCKGGGTSS…RRKKDSVESH (143 aa). Residues 183 to 193 show a composition bias toward low complexity; that stretch reads GGSSTNSLTGS. The span at 227–254 shows a compositional bias: polar residues; the sequence is SRNSSYASQQSKISGYSTEHSRSSSLSD. Composition is skewed to basic and acidic residues over residues 280–292 and 299–315; these read GSER…EKPP and HLSD…VESH.

It belongs to the EEIG family. In terms of assembly, part of a complex composed of EEIG1, TNFRSF11A/RANK, PLCG2, GAB2, TEC and BTK; complex formation increases in the presence of TNFSF11/RANKL. Interacts with PRDM1/BLIMP1; following TNFSF11/RANKL stimulation in bone marrow-derived macrophages, the interaction promotes the binding of PRDM1/BLIMP1 to the gene promoter of IRF8.

It localises to the nucleus. Its subcellular location is the cytoplasm. It is found in the membrane raft. Functionally, key component of TNFSF11/RANKL- and TNF-induced osteoclastogenesis pathways, thereby mediates bone resorption in pathological bone loss conditions. Required for TNFSF11/RANKL-induced osteoclastogenesis via its interaction with TNFRSF11A/RANK, thereby facilitates the downsteam transcription of NFATC1 and activation of PLCG2. Facilitates recruitment of the transcriptional repressor PRDM1/BLIMP1 to the promoter of the anti-osteoclastogenesis gene IRF8, thereby resulting in transcription of osteoclast differentiation factors. May play a role in estrogen action. The protein is Early estrogen-induced gene 1 protein of Homo sapiens (Human).